We begin with the raw amino-acid sequence, 185 residues long: Elongation factor P (185 aa).

The protein belongs to the elongation factor P family.

The protein resides in the cytoplasm. The protein operates within protein biosynthesis; polypeptide chain elongation. In terms of biological role, involved in peptide bond synthesis. Stimulates efficient translation and peptide-bond synthesis on native or reconstituted 70S ribosomes in vitro. Probably functions indirectly by altering the affinity of the ribosome for aminoacyl-tRNA, thus increasing their reactivity as acceptors for peptidyl transferase. In Geobacillus thermodenitrificans (strain NG80-2), this protein is Elongation factor P.